The following is an 85-amino-acid chain: U4-theraphotoxin-Hhn1t (85 aa).

The signal sequence occupies residues M1–A22. Positions E23–R48 are excised as a propeptide. Cystine bridges form between C52–C66, C56–C77, and C71–C82.

This sequence belongs to the neurotoxin 12 (Hwtx-2) family. 02 (Hwtx-2) subfamily. As to expression, expressed by the venom gland.

It is found in the secreted. Postsynaptic neurotoxin. The chain is U4-theraphotoxin-Hhn1t from Cyriopagopus hainanus (Chinese bird spider).